The primary structure comprises 92 residues: Probable Fe(2+)-trafficking protein (92 aa).

Belongs to the Fe(2+)-trafficking protein family.

Could be a mediator in iron transactions between iron acquisition and iron-requiring processes, such as synthesis and/or repair of Fe-S clusters in biosynthetic enzymes. This Shewanella sp. (strain ANA-3) protein is Probable Fe(2+)-trafficking protein.